Here is a 130-residue protein sequence, read N- to C-terminus: Protein ApaG (130 aa).

Residues 3–127 (SAMTRSINIL…FSLDSPHAKR (125 aa)) form the ApaG domain.

This is Protein ApaG from Parvibaculum lavamentivorans (strain DS-1 / DSM 13023 / NCIMB 13966).